The chain runs to 928 residues: MALTPMMVEYMKTKEEYSDCILFYRLGDFYEMFFDDAITVSRELELVLTGKNCGLEERAPMCGIPHHAAAAYIPRLVNKGYKVAICEQLEDPKEAKGIVKRGVVKIITPGTFIDANSSLENDNTYLMTIYESDERIGLAVSDISTGEFKTTSFDNIKITLLDEISKVAPKEILVDKNISQSLIDDIKGITTALITEKDFNEFIVSKEEIIDQFSDLEVSGLVNEREISSRVLLKYIYETQKMSLTNINLLEQYEIINYMTIDGNSRRNLELTESIREKSKKGSLLWVLDKSATSMGGRTIRKWIEEPLIIKSEIEKRLSGVSEAFSSISFNEDLRSSLKDIYDIERIVGKISNKNVNAKDMLSLKASLDKLPSIKELLGTANSELLKEYYENLDELSDIRELLESSIKEEPSLSIKEGNIIKDGYNSEVDELRQSKLHGKEWIAALENREREFTGIKSLKVGYNKVFGYYIEISKSNYNSIPEGRYVRKQTLANAERYITEELKIMEDKILGAEEKLINLEYSLFTDIRDSIEKEIARLKKSARIISNLDGISTLALIALENDYVKPEINEDGIIEIVDGRHPVVEKVIGRGEFVSNNTTLNQSDKELLLITGPNMAGKSTYMRQVALITLMAQIGSFVPASSANISICDKIFTRIGASDDLAGGKSTFMVEMWEVSNILKNATSKSLVLLDEVGRGTSTYDGLSIAWSVIEYITGNENLRCKTLFATHYHELVKLEGVLPGVKNYSVAVKKMKDSVIFLRKIVEGGADESYGIEVAKLAGLPDDVINRAKEILLGLEGENNFDIHKVTNTEIIENEVAVDINQANNVVTITEKACESKSEYIEKVEAKDSFDKAKSNKDDHRIDEKTENSSKKHKNKDSSNNMQLDFTFIEKEAFLKEVSEVDILSLNPMEAMNTLYRLVAEAKKLK.

Position 613 to 620 (613 to 620 (GPNMAGKS)) interacts with ATP. Residues 854 to 872 (KAKSNKDDHRIDEKTENSS) are compositionally biased toward basic and acidic residues. The interval 854-880 (KAKSNKDDHRIDEKTENSSKKHKNKDS) is disordered.

It belongs to the DNA mismatch repair MutS family.

This protein is involved in the repair of mismatches in DNA. It is possible that it carries out the mismatch recognition step. This protein has a weak ATPase activity. This is DNA mismatch repair protein MutS from Clostridium beijerinckii (strain ATCC 51743 / NCIMB 8052) (Clostridium acetobutylicum).